Reading from the N-terminus, the 493-residue chain is Neuronal pentraxin receptor (493 aa).

At Met1–Lys2 the chain is on the cytoplasmic side. A helical; Signal-anchor for type II membrane protein membrane pass occupies residues Phe3–Ile23. Residues Ala24–Ala493 are Extracellular-facing. Positions Pro37 to Val72 are disordered. The N-linked (GlcNAc...) asparagine glycan is linked to Asn42. The span at Ser57–Val72 shows a compositional bias: low complexity. Asn211 carries N-linked (GlcNAc...) asparagine glycosylation. The Pentraxin (PTX) domain occupies Asp285 to Cys487. Cysteines 315 and 376 form a disulfide. 5 residues coordinate Ca(2+): Asn340, Glu418, Gln419, Asp420, and Gln430. An N-linked (GlcNAc...) asparagine glycan is attached at Asn456.

Heteropentamer with NPTX1 and/or NPTX2. Also binds taipoxin-associated calcium-binding protein 49 (TCBP49/RCN2). Interacts with KLHL2. The cofactor is Ca(2+). Ubiquitinated by a cullin-RING-based BCR (BTB-CUL3-RBX1) E3 ubiquitin-protein ligase complex containing KLHL2.

It localises to the membrane. In terms of biological role, may be involved in mediating uptake of synaptic material during synapse remodeling or in mediating the synaptic clustering of AMPA glutamate receptors at a subset of excitatory synapses. This chain is Neuronal pentraxin receptor (Nptxr), found in Mus musculus (Mouse).